The following is a 512-amino-acid chain: 2,3-bisphosphoglycerate-independent phosphoglycerate mutase (512 aa).

Mn(2+)-binding residues include D14 and S64. The active-site Phosphoserine intermediate is S64. Residues H125, 155 to 156, R187, R193, 259 to 262, and K332 each bind substrate; these read RD and RADR. Mn(2+) is bound by residues D399, H403, D440, H441, and H459.

The protein belongs to the BPG-independent phosphoglycerate mutase family. In terms of assembly, monomer. Mn(2+) serves as cofactor.

The catalysed reaction is (2R)-2-phosphoglycerate = (2R)-3-phosphoglycerate. Its pathway is carbohydrate degradation; glycolysis; pyruvate from D-glyceraldehyde 3-phosphate: step 3/5. Its function is as follows. Catalyzes the interconversion of 2-phosphoglycerate and 3-phosphoglycerate. This is 2,3-bisphosphoglycerate-independent phosphoglycerate mutase from Ruthia magnifica subsp. Calyptogena magnifica.